The following is a 404-amino-acid chain: Nicotinate phosphoribosyltransferase (404 aa).

His224 carries the phosphohistidine; by autocatalysis modification.

The protein belongs to the NAPRTase family. Post-translationally, transiently phosphorylated on a His residue during the reaction cycle. Phosphorylation strongly increases the affinity for substrates and increases the rate of nicotinate D-ribonucleotide production. Dephosphorylation regenerates the low-affinity form of the enzyme, leading to product release.

The enzyme catalyses nicotinate + 5-phospho-alpha-D-ribose 1-diphosphate + ATP + H2O = nicotinate beta-D-ribonucleotide + ADP + phosphate + diphosphate. It functions in the pathway cofactor biosynthesis; NAD(+) biosynthesis; nicotinate D-ribonucleotide from nicotinate: step 1/1. In terms of biological role, catalyzes the synthesis of beta-nicotinate D-ribonucleotide from nicotinate and 5-phospho-D-ribose 1-phosphate at the expense of ATP. This Proteus mirabilis (strain HI4320) protein is Nicotinate phosphoribosyltransferase.